The sequence spans 614 residues: Putative amino acid transporter AAT1 (614 aa).

11 helical membrane-spanning segments follow: residues 184-216 (VLFL…LILL), 222-243 (YITT…YGNL), 255-275 (LIDF…LILV), 295-311 (RIFI…PLTF), 318-340 (INCF…GYQS), 360-380 (HFFK…NACF), 401-417 (ILIQ…LGYL), 437-459 (SILL…NFIA), 531-547 (CAAI…EFNV), 553-575 (FIGI…LIYY), and 587-613 (RYAT…FIII).

This sequence belongs to the amino acid/polyamine transporter 2 family.

The protein resides in the vacuole membrane. Putative amino acid transporter. Involved in maintaining the osmotic homeostasis of the digestive vacuole. Important for the timely development and growth of the asexual-stage parasites and male gametocyte maturation. The protein is Putative amino acid transporter AAT1 of Plasmodium berghei (strain Anka).